The primary structure comprises 342 residues: Phosphoribosylformylglycinamidine cyclo-ligase (342 aa).

Belongs to the AIR synthase family.

The protein resides in the cytoplasm. The catalysed reaction is 2-formamido-N(1)-(5-O-phospho-beta-D-ribosyl)acetamidine + ATP = 5-amino-1-(5-phospho-beta-D-ribosyl)imidazole + ADP + phosphate + H(+). The protein operates within purine metabolism; IMP biosynthesis via de novo pathway; 5-amino-1-(5-phospho-D-ribosyl)imidazole from N(2)-formyl-N(1)-(5-phospho-D-ribosyl)glycinamide: step 2/2. This is Phosphoribosylformylglycinamidine cyclo-ligase from Gloeothece citriformis (strain PCC 7424) (Cyanothece sp. (strain PCC 7424)).